The sequence spans 139 residues: Actin-depolymerizing factor 3 (139 aa).

The ADF-H domain occupies 7–139 (GVAVNDECML…SLDEIKDRAR (133 aa)).

The protein belongs to the actin-binding proteins ADF family. In terms of tissue distribution, expressed in all tissues except pollen.

The protein resides in the cytoplasm. In terms of biological role, actin-depolymerizing protein. Severs actin filaments (F-actin) and binds to actin monomers. The protein is Actin-depolymerizing factor 3 (ADF3) of Zea mays (Maize).